Here is a 651-residue protein sequence, read N- to C-terminus: Probable potassium transport system protein Kup (651 aa).

Helical transmembrane passes span 41–61 (LVLG…IYAF), 82–102 (VVSL…VLFV), 130–150 (LILG…VITP), 163–183 (IVAP…LVTL), 194–214 (VAIV…ASGL), 235–255 (FLTV…LAMT), 276–296 (WLWI…AFIL), 309–329 (MIPS…TVIA), 366–386 (IYIP…VLGF), 395–415 (AYGI…YIVM), 426–446 (ALPI…ANII), and 450–470 (EGGW…WTWV).

The protein belongs to the HAK/KUP transporter (TC 2.A.72) family.

It localises to the cell inner membrane. The catalysed reaction is K(+)(in) + H(+)(in) = K(+)(out) + H(+)(out). In terms of biological role, transport of potassium into the cell. Likely operates as a K(+):H(+) symporter. The chain is Probable potassium transport system protein Kup from Brucella suis (strain ATCC 23445 / NCTC 10510).